The sequence spans 791 residues: RAS guanyl-releasing protein 1 (791 aa).

Residues 49 to 172 enclose the N-terminal Ras-GEF domain; the sequence is LGKLSKGASL…RLIDTAQINS (124 aa). A ras exchanger motif region; required for transforming activity region spans residues 53 to 106; it reads SKGASLDDLIQMCIQAFDLDGNMGQNSELLQIMLTMHGFLLPSTELLMKLRTLY. Positions 201-432 constitute a Ras-GEF domain; sequence EPQELAEHLT…YELSYAREPR (232 aa). 2 EF-hand domains span residues 466–501 and 502–528; these read HVQR…FPFS and FCVM…ASSI. Ca(2+) is bound by residues Asp479, Asp481, Asp483, Tyr485, Glu490, Asp506, Asp508, Glu510, and Glu517. The Phorbol-ester/DAG-type zinc-finger motif lies at 537-587; it reads LHNFQETTYLRPTFCDNCAGFLWGVIKQGYRCKDCGMNCHKQCKELVVFEC. Positions 683 to 695 are enriched in polar residues; the sequence is QVPSPQRSRTPGL. A disordered region spans residues 683 to 715; the sequence is QVPSPQRSRTPGLTSHLPISPMPSPCPSPVPTR. A compositionally biased stretch (pro residues) spans 702 to 712; it reads SPMPSPCPSPV. Positions 728–785 form a coiled coil; the sequence is IRKARAELRGGKAGIQELEKEKALLKEENTTLKIQLKDAQRRVETLRAELRKYVLDSD.

It belongs to the RASGRP family.

It localises to the cytoplasm. The protein localises to the cytosol. Its subcellular location is the cell membrane. The protein resides in the golgi apparatus membrane. It is found in the endoplasmic reticulum membrane. With respect to regulation, regulated by F-actin polymerization and probably by calcium. Functionally, functions as a diacylglycerol (DAG)-regulated nucleotide exchange factor specifically activating Ras through the exchange of bound GDP for GTP. The sequence is that of RAS guanyl-releasing protein 1 (rasgrp1) from Xenopus tropicalis (Western clawed frog).